The sequence spans 189 residues: Peptidyl-tRNA hydrolase (189 aa).

Residue Tyr14 coordinates tRNA. The active-site Proton acceptor is His19. Tyr64, Asn66, and Asn112 together coordinate tRNA.

Belongs to the PTH family. As to quaternary structure, monomer.

It localises to the cytoplasm. The enzyme catalyses an N-acyl-L-alpha-aminoacyl-tRNA + H2O = an N-acyl-L-amino acid + a tRNA + H(+). Functionally, hydrolyzes ribosome-free peptidyl-tRNAs (with 1 or more amino acids incorporated), which drop off the ribosome during protein synthesis, or as a result of ribosome stalling. Catalyzes the release of premature peptidyl moieties from peptidyl-tRNA molecules trapped in stalled 50S ribosomal subunits, and thus maintains levels of free tRNAs and 50S ribosomes. In Clostridium botulinum (strain 657 / Type Ba4), this protein is Peptidyl-tRNA hydrolase.